We begin with the raw amino-acid sequence, 1079 residues long: BRD4-interacting chromatin-remodeling complex-associated protein-like (1079 aa).

2 disordered regions span residues 51–79 (NSSN…LPLS) and 509–604 (LHLS…TPGT). Low complexity predominate over residues 68-79 (LGEGPSDGLPLS). A compositionally biased stretch (polar residues) spans 544-576 (SSASTAHPSLGSAVQSGSSGSNFTGDQLTQPNR). A compositionally biased stretch (low complexity) spans 590–604 (SSSKSTSTFSNTPGT). At Ser-623 the chain carries Phosphoserine. 3 disordered regions span residues 669-691 (EKVV…GGQK), 837-877 (TQFG…NHDQ), and 917-954 (TSEE…TESK). Basic and acidic residues-rich tracts occupy residues 918 to 928 (SEEKASRREPL) and 938 to 952 (EGHR…HGTE). A Phosphoserine modification is found at Ser-980.

As to quaternary structure, component of the multiprotein chromatin-remodeling complexes SWI/SNF: SWI/SNF-A (BAF), SWI/SNF-B (PBAF) and related complexes. The canonical complex contains a catalytic subunit (either SMARCA4/BRG1/BAF190A or SMARCA2/BRM/BAF190B) and at least SMARCE1, ACTL6A/BAF53, SMARCC1/BAF155, SMARCC2/BAF170, and SMARCB1/SNF5/BAF47. Other subunits specific to each of the complexes may also be present permitting several possible combinations developmentally and tissue specific. Component of the SWI/SNF (GBAF) subcomplex, which includes at least BICRA or BICRAL (mutually exclusive), BRD9, SS18, the core BAF subunits, SMARCA2/BRM, SMARCA4/BRG1/BAF190A, ACTL6A/BAF53, SMARCC1/BAF155, and SMARCD1/BAF60A.

Component of SWI/SNF chromatin remodeling subcomplex GBAF that carries out key enzymatic activities, changing chromatin structure by altering DNA-histone contacts within a nucleosome in an ATP-dependent manner. The sequence is that of BRD4-interacting chromatin-remodeling complex-associated protein-like from Homo sapiens (Human).